A 303-amino-acid chain; its full sequence is Glutaminase (303 aa).

The substrate site is built by S61, N111, E155, N162, Y186, Y238, and V256.

This sequence belongs to the glutaminase family. As to quaternary structure, homotetramer.

It catalyses the reaction L-glutamine + H2O = L-glutamate + NH4(+). This Marinomonas sp. (strain MWYL1) protein is Glutaminase.